A 209-amino-acid polypeptide reads, in one-letter code: Pyridoxine/pyridoxamine 5'-phosphate oxidase (209 aa).

Residues R5–Y8 and K63 contribute to the substrate site. FMN is bound by residues R58–K63, F73–T74, R79, K80, and Q102. Residues Y120, R124, and S128 each coordinate substrate. Residues Q137 to S138 and W181 contribute to the FMN site. R187 to H189 is a substrate binding site. R191 contributes to the FMN binding site.

Belongs to the pyridoxamine 5'-phosphate oxidase family. As to quaternary structure, homodimer. It depends on FMN as a cofactor.

It catalyses the reaction pyridoxamine 5'-phosphate + O2 + H2O = pyridoxal 5'-phosphate + H2O2 + NH4(+). The enzyme catalyses pyridoxine 5'-phosphate + O2 = pyridoxal 5'-phosphate + H2O2. It functions in the pathway cofactor metabolism; pyridoxal 5'-phosphate salvage; pyridoxal 5'-phosphate from pyridoxamine 5'-phosphate: step 1/1. Its pathway is cofactor metabolism; pyridoxal 5'-phosphate salvage; pyridoxal 5'-phosphate from pyridoxine 5'-phosphate: step 1/1. Catalyzes the oxidation of either pyridoxine 5'-phosphate (PNP) or pyridoxamine 5'-phosphate (PMP) into pyridoxal 5'-phosphate (PLP). The polypeptide is Pyridoxine/pyridoxamine 5'-phosphate oxidase (Alcanivorax borkumensis (strain ATCC 700651 / DSM 11573 / NCIMB 13689 / SK2)).